The following is a 208-amino-acid chain: Large ribosomal subunit protein eL13 (208 aa).

The protein belongs to the eukaryotic ribosomal protein eL13 family.

In Chlamydomonas sp. (strain W80), this protein is Large ribosomal subunit protein eL13 (RPL13).